The primary structure comprises 1083 residues: Protein HOS4 (1083 aa).

2 disordered regions span residues 1–233 (MNET…RKLV) and 267–328 (SSLF…YRDS). Phosphoserine is present on residues serine 14 and serine 16. Basic and acidic residues predominate over residues 24-62 (TRREELEKISKQETSEEEDTAGKHEQRETLSEEVSDKFP). Residue threonine 37 is modified to Phosphothreonine. Serine 67 bears the Phosphoserine mark. A compositionally biased stretch (polar residues) spans 67 to 85 (SFRSQTTSVHQATQNNLNA). Basic and acidic residues predominate over residues 86–118 (KESEDLAHKNDASSHEGEVNGDSRPDDVPETNE). Residues 135–149 (PNVRNVDIQNHQPFS) are compositionally biased toward polar residues. The span at 151 to 166 (DQLRAMLKEPKRKTVD) shows a compositional bias: basic and acidic residues. Positions 167 to 185 (DFIEEEGLGAVEEEDLSDE) are enriched in acidic residues. The segment covering 186–207 (VLEKNTTEPENVEKDIEYSDSD) has biased composition (basic and acidic residues). The span at 277–293 (VKETNNNLSNMNSSPAQ) shows a compositional bias: polar residues. At serine 290 the chain carries Phosphoserine. Residues 300 to 310 (VSRSNDSNKSS) are compositionally biased toward low complexity. Residues 314–323 (VSKRPKQKKG) are compositionally biased toward basic residues. ANK repeat units lie at residues 329–359 (GGRT…DIND), 363–392 (AGNT…DVNI), and 398–427 (FGDT…DPTI). The tract at residues 472 to 516 (AGIHNDKSKNGNNAHTIDQPPFDNTTKAKNEKAADSPSMASNIDE) is disordered. The span at 481-496 (NGNNAHTIDQPPFDNT) shows a compositional bias: polar residues. Residue serine 507 is modified to Phosphoserine. ANK repeat units lie at residues 532–561 (AGKE…KIDL) and 593–622 (NKTS…DPTK). 2 disordered regions span residues 661–742 (HSED…DDNE) and 762–790 (DEEK…ISKI). Residues 665-675 (NNDDDDDDDNN) are compositionally biased toward acidic residues. Position 698 is a phosphoserine (serine 698). Threonine 700 carries the post-translational modification Phosphothreonine. The span at 721-740 (NNDRDVKESTTSDSRKRLDD) shows a compositional bias: basic and acidic residues. The residue at position 778 (serine 778) is a Phosphoserine.

Identified in the Set3C complex with HOS2, HST1, SNT1, SIF2, CPR1 and SET3.

In terms of biological role, unknown. Component of the Set3C complex, which is required to repress early/middle sporulation genes during meiosis. The sequence is that of Protein HOS4 (HOS4) from Saccharomyces cerevisiae (strain ATCC 204508 / S288c) (Baker's yeast).